The chain runs to 325 residues: NADH-quinone oxidoreductase subunit H (325 aa).

The next 8 membrane-spanning stretches (helical) occupy residues 11 to 31 (ILLT…CGAF), 81 to 101 (VIFT…FAIV), 114 to 134 (IGIL…LFAG), 154 to 174 (LSYE…AGSF), 186 to 206 (VWNV…GVAV), 237 to 257 (FFVG…TLFF), 265 to 285 (LPPF…FILI), and 304 to 324 (ICLP…LWQA).

This sequence belongs to the complex I subunit 1 family. In terms of assembly, NDH-1 is composed of 13 different subunits. Subunits NuoA, H, J, K, L, M, N constitute the membrane sector of the complex.

It is found in the cell inner membrane. It carries out the reaction a quinone + NADH + 5 H(+)(in) = a quinol + NAD(+) + 4 H(+)(out). Functionally, NDH-1 shuttles electrons from NADH, via FMN and iron-sulfur (Fe-S) centers, to quinones in the respiratory chain. The immediate electron acceptor for the enzyme in this species is believed to be ubiquinone. Couples the redox reaction to proton translocation (for every two electrons transferred, four hydrogen ions are translocated across the cytoplasmic membrane), and thus conserves the redox energy in a proton gradient. This subunit may bind ubiquinone. In Escherichia coli O139:H28 (strain E24377A / ETEC), this protein is NADH-quinone oxidoreductase subunit H.